We begin with the raw amino-acid sequence, 138 residues long: Basic phospholipase A2 homolog MjTX-I (138 aa).

Positions 1-16 (MRTLWIMAVLLVGVEG) are cleaved as a signal peptide. V34 is a binding site for suramin. Intrachain disulfides connect C42-C132, C44-C60, C59-C111, C65-C138, C66-C104, C73-C97, and C91-C102. N43 contacts varespladib. The suramin site is built by G45 and G48. Varespladib is bound by residues H63 and K64. A suramin-binding site is contributed by K85.

It belongs to the phospholipase A2 family. Group II subfamily. K49 sub-subfamily. In terms of assembly, monomer in solution. Homodimer; non-covalently linked (probable conventional/extended dimer conformation). Homotetramer (dimer of homodimer (probable conventional/extended dimer conformation)); non-covalently linked. Homooligomer. As to expression, expressed by the venom gland.

It is found in the secreted. Myotoxin activity is inhibited by suramin and varespladib. Inhibition by suramin may be caused by (i) distortion of MDiS from both monomers impairing the membrane disruption mechanism by the toxin and (ii) surface electrostatic changes of the complex that interfere with the toxin membrane dockage process (putative-MDoS is partially hidden). Inhibition by varespladib is probably through varespladib binding to MDoS. Its function is as follows. Snake venom phospholipase A2 homolog that lacks enzymatic activity. In vivo, it displays local myotoxin and edema-inducing activities and is lethal by intraperitoneal injection. The myotoxicity effect is weaker in comparison to other myotoxins, probably due to the formation of high molecular weight complexes and to the oligomeric conformation (conventional dimer). It shows specificity toward neurons and myotubes, but not on a variety of other cell types. This PLA2 excites a cohort of sensory neurons via ATP release and consequent activation of P2RX2 and/or P2RX3 purinergic receptors. Pannexin hemichannels act as downstream mediators of toxin-evoked ATP release. In vivo, it elicits nonneurogenic inflammatory pain, thermal hyperalgesia, and mechanical allodynia, of which the latter is completely dependent on purinergic signaling. The polypeptide is Basic phospholipase A2 homolog MjTX-I (Bothrops moojeni (Lance-headed viper)).